Reading from the N-terminus, the 238-residue chain is MAMGLVGQKIGMTRLISDDGSITPVSVIKIELNRIVQTKTVDTNGYSAIQVTTGVKVNKKGEAKVHRVPAAIKGHYAKTSQEIGLGLWEFRVEADEITDATSVDISLFSAGHYVNVVGRSKGKGFQGGVKRHNFQMQDATHGNSISHRAIGSTGQCQEPGRVFKGKKMAGHMGNEQVTQECLKIVKVDSERNIIFVKGSIPGATKGFVKISLSSKKNKINQEVSKNIQNQATNEVVLN.

Gln-157 bears the N5-methylglutamine mark.

Belongs to the universal ribosomal protein uL3 family. As to quaternary structure, part of the 50S ribosomal subunit. Forms a cluster with proteins L14 and L19. In terms of processing, methylated by PrmB.

Functionally, one of the primary rRNA binding proteins, it binds directly near the 3'-end of the 23S rRNA, where it nucleates assembly of the 50S subunit. The protein is Large ribosomal subunit protein uL3 of Ruthia magnifica subsp. Calyptogena magnifica.